The sequence spans 312 residues: Beta-ketoacyl-[acyl-carrier-protein] synthase III (312 aa).

Residues Cys-112 and His-237 contribute to the active site. Residues 238-242 form an ACP-binding region; that stretch reads QANIR. Residue Asn-267 is part of the active site.

The protein belongs to the thiolase-like superfamily. FabH family. As to quaternary structure, homodimer.

It localises to the cytoplasm. The enzyme catalyses malonyl-[ACP] + acetyl-CoA + H(+) = 3-oxobutanoyl-[ACP] + CO2 + CoA. Its pathway is lipid metabolism; fatty acid biosynthesis. In terms of biological role, catalyzes the condensation reaction of fatty acid synthesis by the addition to an acyl acceptor of two carbons from malonyl-ACP. Catalyzes the first condensation reaction which initiates fatty acid synthesis and may therefore play a role in governing the total rate of fatty acid production. Possesses both acetoacetyl-ACP synthase and acetyl transacylase activities. Its substrate specificity determines the biosynthesis of branched-chain and/or straight-chain of fatty acids. The protein is Beta-ketoacyl-[acyl-carrier-protein] synthase III of Listeria innocua serovar 6a (strain ATCC BAA-680 / CLIP 11262).